A 250-amino-acid chain; its full sequence is UDP-2,3-diacylglucosamine hydrolase (250 aa).

Mn(2+) is bound by residues D7, H9, D40, N78, and H113. 78–79 (NR) contributes to the substrate binding site. Residues D121, S159, T163, K166, and H194 each coordinate substrate. Residues H194 and H196 each coordinate Mn(2+).

This sequence belongs to the LpxH family. It depends on Mn(2+) as a cofactor.

The protein resides in the cell inner membrane. The enzyme catalyses UDP-2-N,3-O-bis[(3R)-3-hydroxytetradecanoyl]-alpha-D-glucosamine + H2O = 2-N,3-O-bis[(3R)-3-hydroxytetradecanoyl]-alpha-D-glucosaminyl 1-phosphate + UMP + 2 H(+). It functions in the pathway glycolipid biosynthesis; lipid IV(A) biosynthesis; lipid IV(A) from (3R)-3-hydroxytetradecanoyl-[acyl-carrier-protein] and UDP-N-acetyl-alpha-D-glucosamine: step 4/6. In terms of biological role, hydrolyzes the pyrophosphate bond of UDP-2,3-diacylglucosamine to yield 2,3-diacylglucosamine 1-phosphate (lipid X) and UMP by catalyzing the attack of water at the alpha-P atom. Involved in the biosynthesis of lipid A, a phosphorylated glycolipid that anchors the lipopolysaccharide to the outer membrane of the cell. The sequence is that of UDP-2,3-diacylglucosamine hydrolase from Pseudomonas fluorescens (strain ATCC BAA-477 / NRRL B-23932 / Pf-5).